Here is a 672-residue protein sequence, read N- to C-terminus: Glycogen [starch] synthase (672 aa).

Lys56 is a UDP-alpha-D-glucose binding site. The disordered stretch occupies residues 645–672; sequence MRDNEGKVPSAATSRRPSIHSSDGEDDE. Positions 655–665 are enriched in polar residues; it reads AATSRRPSIHS.

This sequence belongs to the glycosyltransferase 3 family. Forms a hetero-octamer with each protomer of the gsy-1 homotetramer bound to one molecule of gyg-1. The N-terminus is involved in interprotomer contacts with gyg-1. The interaction with gyg-1 is required for glycogen production but is not required for gsy-1 intrinsic activity.

The enzyme catalyses [(1-&gt;4)-alpha-D-glucosyl](n) + UDP-alpha-D-glucose = [(1-&gt;4)-alpha-D-glucosyl](n+1) + UDP + H(+). It functions in the pathway glycan biosynthesis; glycogen biosynthesis. Transfers the glycosyl residue from UDP-Glc to the non-reducing end of alpha-1,4-glucan. In Caenorhabditis elegans, this protein is Glycogen [starch] synthase.